The primary structure comprises 455 residues: Mitochondrial distribution and morphology protein 10 (455 aa).

Disordered stretches follow at residues Trp-216–Val-249, Ile-278–Ala-311, and Pro-377–Glu-399. A compositionally biased stretch (low complexity) spans Glu-217–Thr-227. Residues Ser-228 to Arg-237 are compositionally biased toward polar residues. Over residues Ala-291–Pro-301 the composition is skewed to pro residues.

Belongs to the MDM10 family. As to quaternary structure, component of the ER-mitochondria encounter structure (ERMES) or MDM complex, composed of MMM1, MDM10, MDM12 and MDM34. Associates with the mitochondrial outer membrane sorting assembly machinery SAM(core) complex.

The protein localises to the mitochondrion outer membrane. Component of the ERMES/MDM complex, which serves as a molecular tether to connect the endoplasmic reticulum and mitochondria. Components of this complex are involved in the control of mitochondrial shape and protein biogenesis and may function in phospholipid exchange. MDM10 is involved in the late assembly steps of the general translocase of the mitochondrial outer membrane (TOM complex). Functions in the TOM40-specific route of the assembly of outer membrane beta-barrel proteins, including the association of TOM40 with the receptor TOM22 and small TOM proteins. Can associate with the SAM(core) complex as well as the MDM12-MMM1 complex, both involved in late steps of the major beta-barrel assembly pathway, that is responsible for biogenesis of all outer membrane beta-barrel proteins. May act as a switch that shuttles between both complexes and channels precursor proteins into the TOM40-specific pathway. Plays a role in mitochondrial morphology and in the inheritance of mitochondria. This is Mitochondrial distribution and morphology protein 10 from Coprinopsis cinerea (strain Okayama-7 / 130 / ATCC MYA-4618 / FGSC 9003) (Inky cap fungus).